We begin with the raw amino-acid sequence, 217 residues long: Ribonuclease HII (217 aa).

The region spanning Arg-27–Cys-216 is the RNase H type-2 domain. A divalent metal cation-binding residues include Asp-33, Glu-34, and Asp-125.

It belongs to the RNase HII family. Requires Mn(2+) as cofactor. Mg(2+) is required as a cofactor.

Its subcellular location is the cytoplasm. It carries out the reaction Endonucleolytic cleavage to 5'-phosphomonoester.. Endonuclease that specifically degrades the RNA of RNA-DNA hybrids. This is Ribonuclease HII from Geobacter sulfurreducens (strain ATCC 51573 / DSM 12127 / PCA).